A 533-amino-acid polypeptide reads, in one-letter code: Sterol 26-hydroxylase, mitochondrial (533 aa).

A mitochondrion-targeting transit peptide spans 1 to 32 (MAVLSRMRLRWALLDTRVMGHGLCPQGARAKA). The tract at residues 38–58 (LRDHESTEGPGTGQDRPRLRS) is disordered. N6-acetyllysine occurs at positions 142 and 375. The interval 386 to 400 (PLLKAVIKETLRLYP) is sterol-binding. Cys479 contacts heme. An N6-acetyllysine mark is found at Lys512 and Lys523.

The protein belongs to the cytochrome P450 family. As to quaternary structure, interacts with HSP70; this interaction is required for initial targeting to mitochondria. The cofactor is heme. As to expression, expressed in liver, kidney and ovary.

It localises to the mitochondrion inner membrane. The enzyme catalyses 5beta-cholestane-3alpha,7alpha,12alpha-triol + 6 reduced [adrenodoxin] + 3 O2 + 5 H(+) = (25R)-3alpha,7alpha,12alpha-trihydroxy-5beta-cholestan-26-oate + 6 oxidized [adrenodoxin] + 4 H2O. The catalysed reaction is cholestanol + 2 reduced [adrenodoxin] + O2 + 2 H(+) = (25R)-26-hydroxycholestanol + 2 oxidized [adrenodoxin] + H2O. It carries out the reaction (25R)-3beta-hydroxycholest-5-en-7-one-26-al + 2 reduced [adrenodoxin] + O2 + H(+) = (25R)-3beta-hydroxycholest-5-en-7-one-26-oate + 2 oxidized [adrenodoxin] + H2O. It catalyses the reaction (25R)-3beta,26-dihydroxycholest-5-en-7-one + 2 reduced [adrenodoxin] + O2 + 2 H(+) = (25R)-3beta-hydroxycholest-5-en-7-one-26-al + 2 oxidized [adrenodoxin] + 2 H2O. The enzyme catalyses 7-oxocholesterol + 2 reduced [adrenodoxin] + O2 + 2 H(+) = (25R)-3beta,26-dihydroxycholest-5-en-7-one + 2 oxidized [adrenodoxin] + H2O. The catalysed reaction is calciol + 2 reduced [adrenodoxin] + O2 + 2 H(+) = calcidiol + 2 oxidized [adrenodoxin] + H2O. It carries out the reaction (25R)-5beta-cholestane-3alpha,7alpha,12alpha,26-tetrol + 2 reduced [adrenodoxin] + O2 + 2 H(+) = (25R)-3alpha,7alpha,12alpha-trihydroxy-5beta-cholestan-26-al + 2 oxidized [adrenodoxin] + 2 H2O. It catalyses the reaction 2 reduced [adrenodoxin] + cholesterol + O2 + 2 H(+) = (25R)-cholest-5-ene-3beta,26-diol + 2 oxidized [adrenodoxin] + H2O. The enzyme catalyses (25R)-3beta,4beta-dihydroxycholest-5-en-26-al + 2 reduced [adrenodoxin] + O2 + H(+) = (25R)-3beta,4beta-dihydroxycholest-5-en-26-oate + 2 oxidized [adrenodoxin] + H2O. The catalysed reaction is (25R)-4beta,26-dihydroxycholesterol + 2 reduced [adrenodoxin] + O2 + 2 H(+) = (25R)-3beta,4beta-dihydroxycholest-5-en-26-al + 2 oxidized [adrenodoxin] + 2 H2O. It carries out the reaction 4beta-hydroxycholesterol + 2 reduced [adrenodoxin] + O2 + 2 H(+) = (25R)-4beta,26-dihydroxycholesterol + 2 oxidized [adrenodoxin] + H2O. It catalyses the reaction (25R)-3beta-hydroxy-5-cholesten-26-al + 2 reduced [adrenodoxin] + O2 + H(+) = (25R)-3beta-hydroxy-5-cholestenoate + 2 oxidized [adrenodoxin] + H2O. The enzyme catalyses (25R)-cholest-5-ene-3beta,26-diol + 2 reduced [adrenodoxin] + O2 + 2 H(+) = (25R)-3beta-hydroxy-5-cholesten-26-al + 2 oxidized [adrenodoxin] + 2 H2O. The catalysed reaction is (25R)-3alpha,7alpha,12alpha-trihydroxy-5beta-cholestan-26-al + 2 reduced [adrenodoxin] + O2 + H(+) = (25R)-3alpha,7alpha,12alpha-trihydroxy-5beta-cholestan-26-oate + 2 oxidized [adrenodoxin] + H2O. It carries out the reaction 5beta-cholestane-3alpha,7alpha,12alpha-triol + 2 reduced [adrenodoxin] + O2 + 2 H(+) = (25R)-5beta-cholestane-3alpha,7alpha,12alpha,26-tetrol + 2 oxidized [adrenodoxin] + H2O. It functions in the pathway hormone biosynthesis; cholecalciferol biosynthesis. Its pathway is steroid metabolism; cholesterol degradation. The protein operates within lipid metabolism; bile acid biosynthesis. In terms of biological role, cytochrome P450 monooxygenase that catalyzes regio- and stereospecific hydroxylation of cholesterol and its derivatives. Hydroxylates (with R stereochemistry) the terminal methyl group of cholesterol side-chain in a three step reaction to yield at first a C26 alcohol, then a C26 aldehyde and finally a C26 acid. Regulates cholesterol homeostasis by catalyzing the conversion of excess cholesterol to bile acids via both the 'neutral' (classic) and the 'acid' (alternative) pathways. May also regulate cholesterol homeostasis via generation of active oxysterols, which act as ligands for NR1H2 and NR1H3 nuclear receptors, modulating the transcription of genes involved in lipid metabolism. Plays a role in cholestanol metabolism in the cerebellum. Similarly to cholesterol, hydroxylates cholestanol and may facilitate sterol diffusion through the blood-brain barrier to the systemic circulation for further degradation. Also hydroxylates retinal 7-ketocholesterol, a noxious oxysterol with pro-inflammatory and pro-apoptotic effects, and may play a role in its elimination from the retinal pigment epithelium. May play a redundant role in vitamin D biosynthesis. Catalyzes 25-hydroxylation of vitamin D3 that is required for its conversion to a functionally active form. The chain is Sterol 26-hydroxylase, mitochondrial (Cyp27a1) from Rattus norvegicus (Rat).